A 128-amino-acid chain; its full sequence is Deoxycytidylate deaminase (128 aa).

The region spanning 5–128 (DWDEYFLGIA…IERVVYPKES (124 aa)) is the CMP/dCMP-type deaminase domain. Histidine 81 is a Zn(2+) binding site. Glutamate 83 functions as the Proton donor in the catalytic mechanism. Residues cysteine 107 and cysteine 110 each contribute to the Zn(2+) site.

This sequence belongs to the cytidine and deoxycytidylate deaminase family.

It catalyses the reaction dCMP + H2O + H(+) = dUMP + NH4(+). This chain is Deoxycytidylate deaminase (36.1), found in Mycobacterium (Mycobacteriophage D29).